Reading from the N-terminus, the 171-residue chain is Photosystem I assembly protein Ycf3 (171 aa).

TPR repeat units lie at residues 35-68, 72-105, and 120-153; these read AFTYYRDGMSAQSEGEYAEALQNYYKAMRLEIDP, SYILYNIGLIHTSNGEHAKALEYYFQALERNPSL, and GEQAIQQGDPGTSEIWFDKAAEYWKQAIALAPNN.

The protein belongs to the Ycf3 family.

The protein localises to the plastid. It localises to the chloroplast thylakoid membrane. Functionally, essential for the assembly of the photosystem I (PSI) complex. May act as a chaperone-like factor to guide the assembly of the PSI subunits. This Psilotum nudum (Whisk fern) protein is Photosystem I assembly protein Ycf3.